Here is a 483-residue protein sequence, read N- to C-terminus: MHQMTLAEIARGLAEKKFSSEELTRVLLSRIAQLDPQLNSFISLTEDLAITQAQAADARRAAGENGPLLGAPLAHKDLFCTQGIRTSCGSRMLDNFKAPYDATVVSKLASAGTVTLGKTNMDEFAMGSANESSHYGAVKNPWNLECVPGGSSGGSAAAVAARLLPAATGTDTGGSIRQPAALTNLTGLKPTYGRVSRWGMIAYASSLDQAGPMARTAEDCALLLQGMAGFDPQDSTSIDEPVPDYSASLNTSLKGLRIGVPKEYFSAGLDPRIAQLVHESVKELEKLGAIVKQVSLPNLQHAIPAYYVIAPAEASSNLSRFDGVRFGYRCEDPKDLTDLYKRSRAEGFGPEVQRRIMVGAYALSAGYYDAYYLQAQKIRRLIKNDFMSAFAEVDVILGPTTPNPAWKIGAKTHDPIAQYLEDFYTITANLAGLPGLSMPAGFVDGLPVGVQLLAPYFQEGRLLNVAHQYQQVTDWHTRAPEGF.

Active-site charge relay system residues include Lys76 and Ser151. Ser175 acts as the Acyl-ester intermediate in catalysis.

The protein belongs to the amidase family. GatA subfamily. In terms of assembly, heterotrimer of A, B and C subunits.

The enzyme catalyses L-glutamyl-tRNA(Gln) + L-glutamine + ATP + H2O = L-glutaminyl-tRNA(Gln) + L-glutamate + ADP + phosphate + H(+). Its function is as follows. Allows the formation of correctly charged Gln-tRNA(Gln) through the transamidation of misacylated Glu-tRNA(Gln) in organisms which lack glutaminyl-tRNA synthetase. The reaction takes place in the presence of glutamine and ATP through an activated gamma-phospho-Glu-tRNA(Gln). The sequence is that of Glutamyl-tRNA(Gln) amidotransferase subunit A from Pseudomonas syringae pv. tomato (strain ATCC BAA-871 / DC3000).